The chain runs to 455 residues: MISLSLKKIALITNGTLYGADLLINEIVIDTKKIIPGCLFIALIGRKFDAHIFIHDALKKKCAAFVTQKNIKPHVPYIIVENTSIALGQIAGWVRKKTKAKILAITGSCGKTSVKEMTASILRKNGNTISTIDNLNNNIGVPMTLLQLKQEHKYGVIELGASKPGEIAYTSNISQPDIILINNIHCAHLQGFKSLLGVSKAKSEIFSGLKPNSTVIINLDSHHFSQWKKDIKNSNILFFSIKKKKYSNFFCSNIKIHIHGTSFTMHTPCGKINISLPFLGYQNISNALAASAFSFALKIPLKKIKIGLLDTPIVSKRLESIILEPNKILIDDTYNSNVSSMISAIKVLERMPGYKILVTGDMAELGENSMMYHQMIGNTANSSAINKIFSIGDMSSEITKIFNNGKHFLNKKKLSEYLKNVFLKKKKITILVKGSRSTKMEKVVEDLIKESKKKC.

Residue 107 to 113 (GSCGKTS) coordinates ATP.

Belongs to the MurCDEF family. MurF subfamily.

Its subcellular location is the cytoplasm. It catalyses the reaction D-alanyl-D-alanine + UDP-N-acetyl-alpha-D-muramoyl-L-alanyl-gamma-D-glutamyl-meso-2,6-diaminopimelate + ATP = UDP-N-acetyl-alpha-D-muramoyl-L-alanyl-gamma-D-glutamyl-meso-2,6-diaminopimeloyl-D-alanyl-D-alanine + ADP + phosphate + H(+). It participates in cell wall biogenesis; peptidoglycan biosynthesis. Involved in cell wall formation. Catalyzes the final step in the synthesis of UDP-N-acetylmuramoyl-pentapeptide, the precursor of murein. This Buchnera aphidicola subsp. Acyrthosiphon pisum (strain APS) (Acyrthosiphon pisum symbiotic bacterium) protein is UDP-N-acetylmuramoyl-tripeptide--D-alanyl-D-alanine ligase.